Reading from the N-terminus, the 319-residue chain is Acetyl-coenzyme A carboxylase carboxyl transferase subunit alpha (319 aa).

Residues 35–296 (DLDKEIEQLE…KANLLRQLED (262 aa)) enclose the CoA carboxyltransferase C-terminal domain.

This sequence belongs to the AccA family. As to quaternary structure, acetyl-CoA carboxylase is a heterohexamer composed of biotin carboxyl carrier protein (AccB), biotin carboxylase (AccC) and two subunits each of ACCase subunit alpha (AccA) and ACCase subunit beta (AccD).

Its subcellular location is the cytoplasm. The catalysed reaction is N(6)-carboxybiotinyl-L-lysyl-[protein] + acetyl-CoA = N(6)-biotinyl-L-lysyl-[protein] + malonyl-CoA. It functions in the pathway lipid metabolism; malonyl-CoA biosynthesis; malonyl-CoA from acetyl-CoA: step 1/1. In terms of biological role, component of the acetyl coenzyme A carboxylase (ACC) complex. First, biotin carboxylase catalyzes the carboxylation of biotin on its carrier protein (BCCP) and then the CO(2) group is transferred by the carboxyltransferase to acetyl-CoA to form malonyl-CoA. The chain is Acetyl-coenzyme A carboxylase carboxyl transferase subunit alpha from Vibrio campbellii (strain ATCC BAA-1116).